We begin with the raw amino-acid sequence, 534 residues long: ATP synthase subunit alpha (534 aa).

Position 170-177 (170-177) interacts with ATP; the sequence is GDRQTGKT. A disordered region spans residues 505–534; sequence HEDARVKSETAQAAGKDKDEKAAATAGAGK.

Belongs to the ATPase alpha/beta chains family. F-type ATPases have 2 components, CF(1) - the catalytic core - and CF(0) - the membrane proton channel. CF(1) has five subunits: alpha(3), beta(3), gamma(1), delta(1), epsilon(1). CF(0) has three main subunits: a(1), b(2) and c(9-12). The alpha and beta chains form an alternating ring which encloses part of the gamma chain. CF(1) is attached to CF(0) by a central stalk formed by the gamma and epsilon chains, while a peripheral stalk is formed by the delta and b chains.

The protein localises to the cell inner membrane. It carries out the reaction ATP + H2O + 4 H(+)(in) = ADP + phosphate + 5 H(+)(out). Its function is as follows. Produces ATP from ADP in the presence of a proton gradient across the membrane. The alpha chain is a regulatory subunit. The sequence is that of ATP synthase subunit alpha from Acidobacterium capsulatum (strain ATCC 51196 / DSM 11244 / BCRC 80197 / JCM 7670 / NBRC 15755 / NCIMB 13165 / 161).